We begin with the raw amino-acid sequence, 118 residues long: NADH-quinone oxidoreductase subunit A (118 aa).

A run of 3 helical transmembrane segments spans residues 6 to 26 (LIIG…LLTA), 61 to 81 (FMYG…LPWA), and 87 to 107 (LGLF…IGLW).

The protein belongs to the complex I subunit 3 family. In terms of assembly, NDH-1 is composed of 14 different subunits. Subunits NuoA, H, J, K, L, M, N constitute the membrane sector of the complex.

It is found in the cell membrane. The catalysed reaction is a quinone + NADH + 5 H(+)(in) = a quinol + NAD(+) + 4 H(+)(out). Its function is as follows. NDH-1 shuttles electrons from NADH, via FMN and iron-sulfur (Fe-S) centers, to quinones in the respiratory chain. The immediate electron acceptor for the enzyme in this species is believed to be a menaquinone. Couples the redox reaction to proton translocation (for every two electrons transferred, four hydrogen ions are translocated across the cytoplasmic membrane), and thus conserves the redox energy in a proton gradient. This is NADH-quinone oxidoreductase subunit A from Clostridium beijerinckii (strain ATCC 51743 / NCIMB 8052) (Clostridium acetobutylicum).